The chain runs to 72 residues: Rubredoxin (72 aa).

The Rubredoxin-like domain occupies Asp19–Gly72. Positions 24, 27, 57, and 60 each coordinate Fe cation.

The protein belongs to the rubredoxin family. Fe(3+) is required as a cofactor.

Its function is as follows. Rubredoxin is a small nonheme, iron protein lacking acid-labile sulfide. Its single Fe, chelated to 4 Cys, functions as an electron acceptor and may also stabilize the conformation of the molecule. Could be involved in hydrogenase-linked redox processes. This chain is Rubredoxin (hoxR), found in Azotobacter vinelandii.